Reading from the N-terminus, the 1086-residue chain is MTMLKEIKKADLSAAFYPSGELAWLKLKDIMLNQVIQNPLENRLSQIYVRAHVGDKIEIYPLLSRDAEVGFNENGVEYRGVVGPFRYSVQMHFHTRGWFYDVTVDGDLEFDLVYLQDLGLAEQAAVRTNEAYMSQYIDYHVTEGATGFTVQARQNQPQNERFPAVQIGALTKIVGYATDGFDIYGTNYKLTSELANLKEKSLPSRVYQYEFAQISLQTELFTNHGETIFYGYATENQPKASGAPFENLAELKSNISEQPYQPSTKAILNKHIGTPITGETISDSWLQENFPDRIQEEQQNGALLSFFTPNYAHVVMREKEAELERPHGSILLDKVDVLNPEATLSATTYMYGAFLSQLVAGNTNMNKWNSHARNPLNILQTSGLRIYIELDSELRLLGVPSVWETSTNYSTWYYQWNGDLITVQTTLTADSKEAFVTVHSEKGHSYKLVLTNQVTMGTNEYDTTVKKEIKDGIVTYFPAEDSPILETYPALQFRVDGTYNELTDERYFAKDYVGTAGLDVFVFEPSDKATFHVQAKLSDEFSKPTEDLEANNKVIRASYDELTAQFHLNHQSTTAEKLNLTVYWYAHQMLVHYASPHGLEQYSGAAWGTRDVSQGPFEFFLATGNKAVLRKLVLTIFSHQYQDTGDWPQWFMFDKYTSIQQEESHGDVIVWPLKIIGDYLEMSGDAGILEEAIPFVDRESKTFTKEQGTLLEHIELAVKTIEARFMKGTALSNYGDGDWDDTLQPANAQLKKNMVSSWTVALTYQTFKRLAAFLPVGEKYETLAKNVQADFAKYMTNDTDVIPGFLYLEEGKAPVWMIHPEDKETNIKYRLIPLTRSVISELVDKKQASRNFEIIGEHLLHPDGVRLMSEPAHYAGGVSTHFKRAEQAANFGREVGLQYVHAHIRYIEALAKIGDKSAWHMLDVINPINIKEVVPNAALRQSNTYFSSSDAAFLDRYQAQNEFGRVKEGSIPVKGGWRIYSSGPGIYLHQLISSVLGIRQTEDALIFDPILPEELDGLECHIELDNYPLDLTFESADEGSIVVNGEKQPVENGANLYRTGALILPKKNLTTKCSQITIKFQKNNRL.

Residue aspartate 741 is the Proton donor of the active site.

The protein belongs to the glycosyl hydrolase 94 family. As to quaternary structure, monomer.

It catalyses the reaction [(1-&gt;2)-beta-D-glucosyl](n) + phosphate = [(1-&gt;2)-beta-D-glucosyl](n-1) + alpha-D-glucose 1-phosphate. Catalyzes the reversible phosphorolysis of beta-(1-&gt;2)-D-glucans. The minimum length of the substrate for the phosphorolytic reaction is 3 D-glucose units. The protein is 1,2-beta-oligoglucan phosphorylase of Listeria innocua serovar 6a (strain ATCC BAA-680 / CLIP 11262).